The primary structure comprises 482 residues: 3-isopropylmalate dehydratase large subunit (482 aa).

The interval 60-79 (ATPDHNVPTTRAERQGGLES) is disordered. Residues Cys-353, Cys-414, and Cys-417 each contribute to the [4Fe-4S] cluster site.

It belongs to the aconitase/IPM isomerase family. LeuC type 1 subfamily. In terms of assembly, heterodimer of LeuC and LeuD. The cofactor is [4Fe-4S] cluster.

The catalysed reaction is (2R,3S)-3-isopropylmalate = (2S)-2-isopropylmalate. It functions in the pathway amino-acid biosynthesis; L-leucine biosynthesis; L-leucine from 3-methyl-2-oxobutanoate: step 2/4. In terms of biological role, catalyzes the isomerization between 2-isopropylmalate and 3-isopropylmalate, via the formation of 2-isopropylmaleate. The polypeptide is 3-isopropylmalate dehydratase large subunit (Xanthomonas euvesicatoria pv. vesicatoria (strain 85-10) (Xanthomonas campestris pv. vesicatoria)).